Here is a 141-residue protein sequence, read N- to C-terminus: Large ribosomal subunit protein uL11 (141 aa).

Belongs to the universal ribosomal protein uL11 family. As to quaternary structure, part of the ribosomal stalk of the 50S ribosomal subunit. Interacts with L10 and the large rRNA to form the base of the stalk. L10 forms an elongated spine to which L12 dimers bind in a sequential fashion forming a multimeric L10(L12)X complex. In terms of processing, one or more lysine residues are methylated.

Functionally, forms part of the ribosomal stalk which helps the ribosome interact with GTP-bound translation factors. This Thermotoga neapolitana (strain ATCC 49049 / DSM 4359 / NBRC 107923 / NS-E) protein is Large ribosomal subunit protein uL11.